Here is a 394-residue protein sequence, read N- to C-terminus: Cytochrome c oxidase subunit 2, mitochondrial (394 aa).

The transit peptide at 1 to 119 (ILCPLEAFIV…RNSRLIHSTS (119 aa)) directs the protein to the mitochondrion. Topologically, residues 120 to 181 (KIVPNSEIQN…MQGIIDLHHD (62 aa)) are mitochondrial intermembrane. Residues 182-198 (IFFFVIQIGVFVSWVLL) form a helical membrane-spanning segment. The Mitochondrial matrix portion of the chain corresponds to 199–226 (RALWHFRSKMNPIPQRIVHGTTIEILWT). Residues 227–243 (IFPSVILMFIAIPSFAL) form a helical membrane-spanning segment. Topologically, residues 244–394 (LYSMDDIVVD…YGSWVSSQVN (151 aa)) are mitochondrial intermembrane. Cu cation-binding residues include His-327, Cys-362, Glu-364, Cys-366, His-370, and Met-373. Glu-364 serves as a coordination point for Mg(2+).

It belongs to the cytochrome c oxidase subunit 2 family. As to quaternary structure, component of the cytochrome c oxidase (complex IV, CIV), a multisubunit enzyme composed of a catalytic core of 3 subunits and several supernumerary subunits. The complex exists as a monomer or a dimer and forms supercomplexes (SCs) in the inner mitochondrial membrane with ubiquinol-cytochrome c oxidoreductase (cytochrome b-c1 complex, complex III, CIII). Requires Cu cation as cofactor.

It localises to the mitochondrion inner membrane. The enzyme catalyses 4 Fe(II)-[cytochrome c] + O2 + 8 H(+)(in) = 4 Fe(III)-[cytochrome c] + 2 H2O + 4 H(+)(out). In terms of biological role, component of the cytochrome c oxidase, the last enzyme in the mitochondrial electron transport chain which drives oxidative phosphorylation. The respiratory chain contains 3 multisubunit complexes succinate dehydrogenase (complex II, CII), ubiquinol-cytochrome c oxidoreductase (cytochrome b-c1 complex, complex III, CIII) and cytochrome c oxidase (complex IV, CIV), that cooperate to transfer electrons derived from NADH and succinate to molecular oxygen, creating an electrochemical gradient over the inner membrane that drives transmembrane transport and the ATP synthase. Cytochrome c oxidase is the component of the respiratory chain that catalyzes the reduction of oxygen to water. Electrons originating from reduced cytochrome c in the intermembrane space (IMS) are transferred via the dinuclear copper A center (CU(A)) of subunit 2 and heme A of subunit 1 to the active site in subunit 1, a binuclear center (BNC) formed by heme A3 and copper B (CU(B)). The BNC reduces molecular oxygen to 2 water molecules using 4 electrons from cytochrome c in the IMS and 4 protons from the mitochondrial matrix. The protein is Cytochrome c oxidase subunit 2, mitochondrial (COX2) of Glycine max (Soybean).